Consider the following 381-residue polypeptide: N-acetyldiaminopimelate deacetylase (381 aa).

Asp73 is an active-site residue. Glu132 serves as the catalytic Proton acceptor.

The protein belongs to the peptidase M20A family. N-acetyldiaminopimelate deacetylase subfamily.

The enzyme catalyses N-acetyl-(2S,6S)-2,6-diaminopimelate + H2O = (2S,6S)-2,6-diaminopimelate + acetate. Its pathway is amino-acid biosynthesis; L-lysine biosynthesis via DAP pathway; LL-2,6-diaminopimelate from (S)-tetrahydrodipicolinate (acetylase route): step 3/3. Its function is as follows. Catalyzes the conversion of N-acetyl-diaminopimelate to diaminopimelate and acetate. The sequence is that of N-acetyldiaminopimelate deacetylase from Limosilactobacillus reuteri (strain DSM 20016) (Lactobacillus reuteri).